The sequence spans 44 residues: Protein PsbN (44 aa).

The chain crosses the membrane as a helical span at residues 6-26 (FFFTIFLWCLLLSITGYSIYV).

It belongs to the PsbN family.

It localises to the plastid. The protein resides in the chloroplast thylakoid membrane. May play a role in photosystem I and II biogenesis. In Chlorella vulgaris (Green alga), this protein is Protein PsbN.